Consider the following 335-residue polypeptide: Expansin-like protein 3 (335 aa).

The N-terminal stretch at 1 to 20 is a signal peptide; the sequence is MKFNTIFLVLSIVKFILISA. Topologically, residues 21–314 are extracellular; that stretch reads QSCPFSQSII…LNENENIESN (294 aa). Residues 43–143 form the Expansin-like EG45 domain; the sequence is AGNCGFEKLN…VKVPCEVSGN (101 aa). 2 disulfides stabilise this stretch: Cys-46–Cys-76 and Cys-79–Cys-138. Residue Asn-87 is glycosylated (N-linked (GlcNAc...) asparagine). The tract at residues 247–276 is disordered; sequence YKPQTFNSQQTSNNQNSNTQTPTKQPSPNS. Residues 249 to 272 are compositionally biased toward low complexity; the sequence is PQTFNSQQTSNNQNSNTQTPTKQP. A helical membrane pass occupies residues 315-335; sequence SLKLLPNFLLLILIILLNINF.

The protein belongs to the expansin family. Expansin A subfamily.

Its subcellular location is the membrane. May serve to lubricate the movement of the cellulose microfibrils during cell growth and wall extension and/or may serve to maintain the fluid state of the slug cell wall. This chain is Expansin-like protein 3 (expl3), found in Dictyostelium discoideum (Social amoeba).